The chain runs to 232 residues: Small heat shock protein, chloroplastic (232 aa).

Residues 1–25 are compositionally biased toward polar residues; the sequence is MAQSVSLSTIASPILSQKPGSSVKS. Disordered regions lie at residues 1–35 and 48–81; these read MAQSVSLSTIASPILSQKPGSSVKSTPPCMASFPL and RAQAGGDGDNKDNSVEVHRVNKDDQGTAVERKPR. The N-terminal 46 residues, 1–46, are a transit peptide targeting the chloroplast; the sequence is MAQSVSLSTIASPILSQKPGSSVKSTPPCMASFPLRRQLPRLGLRN. A compositionally biased stretch (basic and acidic residues) spans 55 to 78; the sequence is GDNKDNSVEVHRVNKDDQGTAVER. Residues 124-232 form the sHSP domain; the sequence is IGGGEIRVPW…ERTVIDVQIQ (109 aa).

It belongs to the small heat shock protein (HSP20) family.

It is found in the plastid. The protein resides in the chloroplast. This chain is Small heat shock protein, chloroplastic (HSP21), found in Pisum sativum (Garden pea).